A 279-amino-acid chain; its full sequence is Lysozyme-like protein 2 (279 aa).

An N-terminal signal peptide occupies residues 1–19 (MIKLLVSFTILFVLSSARP). The Ch-type lysozyme domain occupies 47–265 (MGNAVDFSFP…AAAPKTEVNM (219 aa)).

This sequence belongs to the glycosyl hydrolase 25 family. In terms of tissue distribution, expressed in intestine.

Functionally, involved in resistance to Gram-positive bacteria P.aeruginosa or B.thuringiensis infection. The protein is Lysozyme-like protein 2 of Caenorhabditis elegans.